The primary structure comprises 274 residues: Nickel/cobalt efflux system RcnA (274 aa).

Topologically, residues 1–12 (MTEFTTLLQQGN) are periplasmic. A helical transmembrane segment spans residues 13-33 (AWFFIPSVILLGALHGLEPGH). Residues 34-56 (SKTMMAAFIIAIKGTIKQAVMLG) are Cytoplasmic-facing. A helical membrane pass occupies residues 57-77 (LAATISHTAVVWLIAFGGMVI). Residues 78-86 (SKRFTAQSA) are Periplasmic-facing. A helical transmembrane segment spans residues 87–107 (EPWLQLISAVIIISTAFWMFW). Over 108-174 (RTWRGERNWL…FDGREVTNWQ (67 aa)) the chain is Cytoplasmic. The tract at residues 127–153 (HHHHDHEHHHDHGHHHHHEHGEYQDAH) is disordered. Residues 129 to 144 (HHDHEHHHDHGHHHHH) show a composition bias toward basic residues. The chain crosses the membrane as a helical span at residues 175-195 (ILLFGLTGGLIPCPAAITVLL). At 196–209 (ICIQLKALTLGATL) the chain is on the periplasmic side. The helical transmembrane segment at 210-230 (VVSFSIGLALTLVTVGVGAAI) threads the bilayer. Over 231–251 (SVQQVAKRWSGFNTLAKRAPY) the chain is Cytoplasmic. A helical membrane pass occupies residues 252 to 272 (FSSLLIGLVGVYMGVHGFMGI). The Periplasmic segment spans residues 273 to 274 (MR).

The protein belongs to the NiCoT transporter (TC 2.A.52) family. RcnA subfamily.

Its subcellular location is the cell inner membrane. Functionally, efflux system for nickel and cobalt. This is Nickel/cobalt efflux system RcnA (rcnA) from Escherichia coli O9:H4 (strain HS).